The sequence spans 92 residues: Small ribosomal subunit protein uS19c (92 aa).

The interval 73 to 92 is disordered; sequence EFSPTRTYRGHAKKDKKAKR. The segment covering 80-92 has biased composition (basic residues); it reads YRGHAKKDKKAKR.

It belongs to the universal ribosomal protein uS19 family.

It is found in the plastid. It localises to the chloroplast. Its function is as follows. Protein S19 forms a complex with S13 that binds strongly to the 16S ribosomal RNA. In Chlamydomonas reinhardtii (Chlamydomonas smithii), this protein is Small ribosomal subunit protein uS19c (rps19).